The sequence spans 819 residues: Zinc finger protein 658B (819 aa).

The segment at 141 to 166 (YLSDEHGKCRKSFYWKAHLIQHERPH) adopts a C2H2-type 1; degenerate zinc-finger fold. C2H2-type zinc fingers lie at residues 200-222 (YECNECGKAFCQNSNLSKHLRIH), 278-300 (YECIECGKTFSKTSHLRAHQRIH), 306-328 (YECVECEKTFSHKTHLSVHQRVH), 334-356 (YECNDCGKSFTYNSALRAHQRIH), 362-384 (YECSDCEKTFAHNSALRAHHRIH), 390-412 (YECNECGRSFAHISVLKAHQRIH), 418-440 (YECNECGRSFTYNSALRAHQRIH), 446-468 (YECSDCEKTFAHNSALKIHQRIH), 474-496 (YKCNECEKTFAHNSALRAHQNIH), 502-524 (YECSECGKTFFQKTRLSTHRRIH), 530-552 (YECSKCGKTFSQKSYLSGHERIH), 558-580 (YECNVCGKTFVYKAALIVHQRIH), 586-608 (YECNECGKTFSQRTHLCAHQRIH), and 614-636 (YECNECGKTFADNSALRAHHRIH). The C2H2-type 16; degenerate zinc-finger motif lies at 642-664 (YECNDCGKTFSKTSHLRAHLRTR). 5 consecutive C2H2-type zinc fingers follow at residues 670 to 692 (YECSECGKTFSEKSYVSAHQRVH), 698 to 720 (YECNVCGKPFAHNSTLRVHQRIH), 726 to 748 (YECNDCGKTFSQKSHLSAHQRIH), 754 to 776 (YECNECGKAFAQNSTLRVHQRIH), and 782 to 805 (YECDECGKTFVRKAALRVHHTRMH).

It belongs to the krueppel C2H2-type zinc-finger protein family.

The protein resides in the nucleus. May be involved in transcriptional regulation. This Homo sapiens (Human) protein is Zinc finger protein 658B (ZNF658B).